The following is a 358-amino-acid chain: MSYITPTKRIFTPEDLSKWVGSPTYNTVLDFIVELQSSVTGKSNDSSYETSSIIDKLSKLLSKVDNLITLHPAHDSVSRFGKIEFRDFYSDLSSKAEEYISEITATAIQETSAYFIESWGNSTRIDYGSGHELNFICFLLCLKELGQITSADYEGLVLKVFTQYMSIMRKLQKEYWLEPAGSHGVWGLDDYHFLPFLFGAAQLSTHPHMKPKSIHNDELVEMYSTKYMYFECINFINKIKTIPNHQGKLSLRWHSPMLDDISAAKNWDKIREGMVKMYKVEVLGKLPIMQHFMFGSLLKCPEGIPEHTDENGHGENPEDHCGHAHVNTWGDCCGIKIPSGIAASESLKHERKGNIPFD.

Belongs to the PTPA-type PPIase family.

Its subcellular location is the cytoplasm. The catalysed reaction is [protein]-peptidylproline (omega=180) = [protein]-peptidylproline (omega=0). Its function is as follows. PPIases accelerate the folding of proteins. It catalyzes the cis-trans isomerization of proline imidic peptide bonds in oligopeptides. Acts as a regulatory subunit for PP2A-like phosphatases modulating their activity or substrate specificity, probably by inducing a conformational change in the catalytic subunit, a direct target of the PPIase. Can reactivate inactive phosphatase PP2A-phosphatase methylesterase complexes (PP2Ai) in presence of ATP and Mg(2+) by dissociating the inactive form from the complex. This chain is Serine/threonine-protein phosphatase 2A activator 2 (RRD2), found in Candida albicans (strain SC5314 / ATCC MYA-2876) (Yeast).